We begin with the raw amino-acid sequence, 29 residues long: Galanin (29 aa).

Ala-29 is modified (alanine amide).

Belongs to the galanin family.

Its subcellular location is the secreted. Contracts smooth muscle of the gastrointestinal and genitourinary tract, regulates growth hormone release, modulates insulin release, and may be involved in the control of adrenal secretion. The protein is Galanin (gal) of Oncorhynchus mykiss (Rainbow trout).